We begin with the raw amino-acid sequence, 290 residues long: Arylamine N-acetyltransferase 2 (290 aa).

Cys68 serves as the catalytic Acyl-thioester intermediate. CoA contacts are provided by Ser103 and Gly104. A substrate-binding site is contributed by 106–107 (IH). Active-site residues include His107 and Asp122. Tyr208 provides a ligand contact to CoA.

This sequence belongs to the arylamine N-acetyltransferase family.

It localises to the cytoplasm. It catalyses the reaction an arylamine + acetyl-CoA = an N-acetylarylamine + CoA. It carries out the reaction an N-hydroxyarylamine + acetyl-CoA = an N-acetoxyarylamine + CoA. Its function is as follows. Catalyzes the N- or O-acetylation of various arylamine and heterocyclic amine substrates. Participates in the detoxification of a plethora of hydrazine and arylamine drugs. In Rattus norvegicus (Rat), this protein is Arylamine N-acetyltransferase 2 (Nat2).